Reading from the N-terminus, the 582-residue chain is Zinc finger protein 319 (582 aa).

Over residues 1–14 the composition is skewed to low complexity; sequence MSESWQQPPQTQPQ. A disordered region spans residues 1 to 39; it reads MSESWQQPPQTQPQQPQPPQPQHHAEPPPALAEHTLPPG. A C2H2-type 1 zinc finger spans residues 76 to 100; that stretch reads PKCGVCGHDLAHLSSPHEHQCLAGH. The segment at 104 to 126 adopts a C2H2-type 2; degenerate zinc-finger fold; that stretch reads FQCTQCLKIFHQATDLLEHQCVQ. Lysine 130 is covalently cross-linked (Glycyl lysine isopeptide (Lys-Gly) (interchain with G-Cter in SUMO2)). The C2H2-type 3 zinc finger occupies 132 to 154; the sequence is FVCGVCKMGFSLLTSLAQHHSSH. The span at 174–196 shows a compositional bias: low complexity; it reads EPATTAAPSLPAAPAPSTVTPAE. Residues 174–198 are disordered; that stretch reads EPATTAAPSLPAAPAPSTVTPAEQA. C2H2-type zinc fingers lie at residues 202 to 224, 230 to 252, and 258 to 280; these read YSCPICQKPFKHLSELSRHERIH, YKCTLCDKSFSQSSHLVHHKRTH, and YKCAVCEKTFKHRSHLVRHMYAH. Serine 281 bears the Phosphoserine mark. A C2H2-type 7; degenerate zinc finger spans residues 287-309; it reads FRCNVCELHFKESSELLQHPCTP. C2H2-type zinc fingers lie at residues 315–337, 343–365, and 371–393; these read FRCGECQKAFKRPSDLRQHERTH, FKCDLCPMGFKQQYALMRHRRTH, and FKCGLCEKGFGQPSHLLYHQHVH. Residues 399 to 421 form a C2H2-type 11; degenerate zinc finger; it reads FKCPVCQKGFDQSAELLRHKCLP. Residues 428–450 form a C2H2-type 12 zinc finger; sequence FKCPVCNKAYKRASALQKHQLAH. The C2H2-type 13; degenerate zinc finger occupies 458–480; the sequence is LRCTLCERRFFSSSEFVQHRCDP. C2H2-type zinc fingers lie at residues 486–508, 514–536, and 542–564; these read LKCPDCEKRFKYASDLQRHRRVH, YKCPNCDKAFKQREHLNKHQGVH, and FKCVWCGERFLDVALLQEHSAQH.

Belongs to the krueppel C2H2-type zinc-finger protein family.

Its subcellular location is the nucleus. In terms of biological role, may be involved in transcriptional regulation. This chain is Zinc finger protein 319 (ZNF319), found in Homo sapiens (Human).